Here is a 397-residue protein sequence, read N- to C-terminus: Pectate lyase 2 (397 aa).

Positions 1–25 are cleaved as a signal peptide; that stretch reads MGIKQCCYILYFTLALVALLQPVRS. N37 is a glycosylation site (N-linked (GlcNAc...) asparagine). C54 and C71 are joined by a disulfide. D194, D218, and D222 together coordinate Ca(2+). The active site involves R274.

Belongs to the polysaccharide lyase 1 family. Amb a subfamily. Monomer. The cofactor is Ca(2+). In terms of processing, the N-terminus is blocked. In terms of tissue distribution, pollen and flowers.

It carries out the reaction Eliminative cleavage of (1-&gt;4)-alpha-D-galacturonan to give oligosaccharides with 4-deoxy-alpha-D-galact-4-enuronosyl groups at their non-reducing ends.. It participates in glycan metabolism; pectin degradation; 2-dehydro-3-deoxy-D-gluconate from pectin: step 2/5. In terms of biological role, has pectate lyase activity. This chain is Pectate lyase 2, found in Ambrosia artemisiifolia (Common ragweed).